The sequence spans 1211 residues: MLSLAAKLVAFFWRTADTPREEAGQLEPELAEGDTKLKTVRGVVTRYCSDYGMIDDMIYFSSDAVTSRVLLNVGQEVIAVVEENKVSNGLKAIRVEAVSDKWEDDSRNHGSPSDCGPRVLIGCVTSLVEGAGCISQTTYFSLESVCEGFEPCKGDWVEAEYRIRPGTWSSEATSVKPLRYKRVDKVCISSLCGRNGVLEESIFFTLDSLKLPDGYTPRRGDVVNAVVVESSQSCYVWRALCMTLVKRRDAAPVHEATHFYGTILLKNKGDIEVTQVTHFGTLKEGRSKTMVIWIENKGDIPQNLVSCKLAGWDKSKQFRFQMLDKDQMCPVVSFVSVPEKENSSDENINSLNSHTKNKTSQMSESSLVNNRGISPGDCTCKGENGEKDNILSRKQMTEPEPGGLVPPGGKTFIVVICDGKNPGRCKELLLLCFSDFLIGRYLEVNVISGEESLIAAREPFSWKKLKSSQALTSAKTTVVVTAQKRNSRRQLPSFLPQYPIPDRLRKCVEQKIDILTFQPLLAELLNMSNYKEKFSTLLWLEEIYAEMELKEYNMSGIILRRNGDLLVLEVPGLAEGRPSLYAGDKLILKTQEYNGHAIEYISYVTEIHEEDVTLKINPEFEQAYNFEPMDVEFTYNRTTSRRCHFALEHVIHLGVKVLFPEEIILQSPQVTGNWNHAQDTKSSGQSTSKKNRKTMTDQAEHGTEERRVGDKDLPVLAPFTAEMSDWVDEIQTPKARKMEFFNPVLNENQKLAVKRILSGDCRPLPYILFGPPGTGKTVTIIEAVLQVHFALPDSRILVCAPSNSAADLVCLRLHESKVLQPATMVRVNATCRFEEIVIDAVKPYCRDGEDIWKASRFRIIITTCSSSGLFYQIGVRVGHFTHVFVDEAGQASEPECLIPLGLMSDISGQIVLAGDPMQLGPVIKSRLAMAYGLNVSFLERLMSRPAYQRDENAFGACGAHNPLLVTKLVKNYRSHEALLMLPSRLFYHRELEVCADPTVVTSLLGWEKLPKKGFPLIFHGVRGSEAREGKSPSWFNPAEAVQVLRYCCLLAHSISSQVSASDIGVITPYRKQVEKIRILLRNVDLMDIKVGSVEEFQGQEYLVIIISTVRSNEDRFEDDRYFLGFLSNSKRFNVAITRPKALLIVLGNPHVLVRDPCFGALLEYSITNGVYMGCDLPPALQSLQNCGEGVADPSYPVVPESTGPEKHQEPS.

Disordered stretches follow at residues 340–385 (KENS…GENG) and 674–710 (WNHA…RVGD). Composition is skewed to polar residues over residues 345-372 (DENI…NNRG) and 674-688 (WNHA…QSTS). The segment covering 694–710 (TMTDQAEHGTEERRVGD) has biased composition (basic and acidic residues). 770-777 (GPPGTGKT) is a binding site for ATP. Positions 886–889 (DEAG) match the DEAG box motif. A disordered region spans residues 1192–1211 (DPSYPVVPESTGPEKHQEPS).

This sequence belongs to the DNA2/NAM7 helicase family. SDE3 subfamily. In terms of assembly, interacts with PIWIL1. Interacts with PIWIL2. Interacts with PIWIL4. Interacts with HSPA2. Interacts with PLD6. As to expression, specifically expressed in testis.

Its subcellular location is the cytoplasm. The enzyme catalyses ATP + H2O = ADP + phosphate + H(+). Its function is as follows. ATP-dependent RNA helicase required during spermatogenesis to repress transposable elements and prevent their mobilization, which is essential for germline integrity. Acts via the piRNA metabolic process, which mediates the repression of transposable elements during meiosis by forming complexes composed of piRNAs and Piwi proteins and governs the methylation and subsequent repression of transposons. Involved in the primary piRNA metabolic process. Specifically binds to piRNA precursors and promotes the generation of intermediate piRNA processing fragments that are subsequently loaded to Piwi proteins. Acts via its ATP-dependent RNA helicase activity: displays 5'-3' RNA unwinding activity and probably mediates unwinding and funneling of single-stranded piRNA precursor transcripts to the endonuclease that catalyzes the first cleavage step of piRNA processing to generate piRNA intermediate fragments that are subsequently loaded to Piwi proteins. The polypeptide is RNA helicase Mov10l1 (Homo sapiens (Human)).